The chain runs to 319 residues: Annexin A4 (319 aa).

Residue alanine 2 is modified to N-acetylalanine. At threonine 7 the chain carries Phosphothreonine. Phosphoserine is present on serine 12. Annexin repeat units lie at residues 14-85 (FNAM…GMMT), 86-157 (PTVL…SLSA), 169-241 (ALVR…AIVK), and 245-316 (NKSA…VLCG). 3 positions are modified to N6-acetyllysine: lysine 213, lysine 293, and lysine 300.

This sequence belongs to the annexin family.

Its subcellular location is the zymogen granule membrane. In terms of biological role, calcium/phospholipid-binding protein which promotes membrane fusion and is involved in exocytosis. The protein is Annexin A4 of Homo sapiens (Human).